The primary structure comprises 419 residues: ATP-dependent RNA helicase RhlB (419 aa).

The Q motif signature appears at 9-37 (QRFSDLALHRIVQQAIKEKGFEFCTPIQA). The Helicase ATP-binding domain maps to 40–217 (LPITLKGQDI…FEHMNDPQYV (178 aa)). 53–60 (AQTGTGKT) contributes to the ATP binding site. Positions 163–166 (DEAD) match the DEAD box motif. The region spanning 241–388 (KMALLMTLLE…VSQYDAKALI (148 aa)) is the Helicase C-terminal domain.

It belongs to the DEAD box helicase family. RhlB subfamily. Component of the RNA degradosome, which is a multiprotein complex involved in RNA processing and mRNA degradation.

The protein localises to the cytoplasm. The catalysed reaction is ATP + H2O = ADP + phosphate + H(+). Functionally, DEAD-box RNA helicase involved in RNA degradation. Has RNA-dependent ATPase activity and unwinds double-stranded RNA. In Histophilus somni (strain 2336) (Haemophilus somnus), this protein is ATP-dependent RNA helicase RhlB.